Here is a 419-residue protein sequence, read N- to C-terminus: Putative zinc metalloprotease spr0242 (419 aa).

Position 18 (histidine 18) interacts with Zn(2+). The active site involves glutamate 19. A Zn(2+)-binding site is contributed by histidine 22. Helical transmembrane passes span 169–191 (LITN…WVLI), 345–367 (ILYF…IPAL), and 388–410 (EIET…AVTW).

It belongs to the peptidase M50B family. It depends on Zn(2+) as a cofactor.

Its subcellular location is the cell membrane. The chain is Putative zinc metalloprotease spr0242 from Streptococcus pneumoniae (strain ATCC BAA-255 / R6).